The following is a 522-amino-acid chain: Light-independent protochlorophyllide reductase subunit B (522 aa).

D36 contributes to the [4Fe-4S] cluster binding site. The active-site Proton donor is D274. Position 409 to 410 (409 to 410 (GL)) interacts with substrate. Residues 426–464 (DEAGPSHHGGKAVPASAPRAEATADEGSTPEEAVPPVAA) are disordered. A compositionally biased stretch (low complexity) spans 455-464 (PEEAVPPVAA).

Belongs to the ChlB/BchB/BchZ family. In terms of assembly, protochlorophyllide reductase is composed of three subunits; BchL, BchN and BchB. Forms a heterotetramer of two BchB and two BchN subunits. Requires [4Fe-4S] cluster as cofactor.

The enzyme catalyses chlorophyllide a + oxidized 2[4Fe-4S]-[ferredoxin] + 2 ADP + 2 phosphate = protochlorophyllide a + reduced 2[4Fe-4S]-[ferredoxin] + 2 ATP + 2 H2O. It functions in the pathway porphyrin-containing compound metabolism; bacteriochlorophyll biosynthesis (light-independent). Functionally, component of the dark-operative protochlorophyllide reductase (DPOR) that uses Mg-ATP and reduced ferredoxin to reduce ring D of protochlorophyllide (Pchlide) to form chlorophyllide a (Chlide). This reaction is light-independent. The NB-protein (BchN-BchB) is the catalytic component of the complex. The polypeptide is Light-independent protochlorophyllide reductase subunit B (Cereibacter sphaeroides (strain ATCC 17025 / ATH 2.4.3) (Rhodobacter sphaeroides)).